We begin with the raw amino-acid sequence, 452 residues long: GTPase Der (452 aa).

EngA-type G domains follow at residues 4-169 and 177-352; these read PVVA…PPAA and IKVA…ESHR. GTP contacts are provided by residues 10–17, 57–61, 120–123, 183–190, 230–234, and 295–298; these read GRPNVGKS, DTGGL, NKCE, DTAGI, and NKWD. One can recognise a KH-like domain in the interval 353-438; that stretch reads RRVSTSVIND…PIRLIWRGKP (86 aa).

Belongs to the TRAFAC class TrmE-Era-EngA-EngB-Septin-like GTPase superfamily. EngA (Der) GTPase family. Associates with the 50S ribosomal subunit.

GTPase that plays an essential role in the late steps of ribosome biogenesis. The chain is GTPase Der from Microcystis aeruginosa (strain NIES-843 / IAM M-2473).